The primary structure comprises 563 residues: Endogenous retroviral envelope protein HEMO (563 aa).

The signal sequence occupies residues 1–26 (MGSLSNYALLQLTLTAFLTILVQPQH). Topologically, residues 27 to 488 (LLAPVFRTLS…IFAKVGDWFR (462 aa)) are extracellular. 2 N-linked (GlcNAc...) asparagine glycosylation sites follow: Asn-122 and Asn-192. The chain crosses the membrane as a helical span at residues 489-509 (SWGYVLLIVLFCLFIFVLIYV). Residues 510-563 (RVFRKSRRSLNSQPLNLALSPQQSAQLLVSETSCQVSNRAMKGLTTHQYDTSLL) are Cytoplasmic-facing.

The protein belongs to the gamma type-C retroviral envelope protein family. Post-translationally, N-glycosylated. Cleaved by some metalloproteinase at 432-Gln-Arg-433 (mainly) or 433-Arg-Gln-434, leading to release the secreted form (Endogenous retroviral envelope protein HEMO, secreted form) in the extracellular medium. As to expression, expressed at high level in the placenta and stem cells (at protein level). Also expressed in the kidney but at a lower level. Endogenous retroviral envelope protein HEMO, secreted form: Present in the blood of pregnant women (at protein level).

Its subcellular location is the cell membrane. The protein localises to the secreted. Functionally, endogenous envelope proteins originate from retroviral envelope proteins, which mediate receptor recognition and membrane fusion during early infection. Endogenous envelope proteins may have kept, lost or modified their original function during evolution. In Homo sapiens (Human), this protein is Endogenous retroviral envelope protein HEMO.